A 380-amino-acid polypeptide reads, in one-letter code: Queuine tRNA-ribosyltransferase (380 aa).

D95 serves as the catalytic Proton acceptor. Residues 95–99 (DSGGF), D149, Q192, and G219 contribute to the substrate site. Residues 250-256 (GVGSPDS) are RNA binding. The active-site Nucleophile is the D269. The tract at residues 274-278 (TRIGR) is RNA binding; important for wobble base 34 recognition. Zn(2+)-binding residues include C307, C309, C312, and H338.

The protein belongs to the queuine tRNA-ribosyltransferase family. In terms of assembly, homodimer. Within each dimer, one monomer is responsible for RNA recognition and catalysis, while the other monomer binds to the replacement base PreQ1. The cofactor is Zn(2+).

The enzyme catalyses 7-aminomethyl-7-carbaguanine + guanosine(34) in tRNA = 7-aminomethyl-7-carbaguanosine(34) in tRNA + guanine. It functions in the pathway tRNA modification; tRNA-queuosine biosynthesis. Functionally, catalyzes the base-exchange of a guanine (G) residue with the queuine precursor 7-aminomethyl-7-deazaguanine (PreQ1) at position 34 (anticodon wobble position) in tRNAs with GU(N) anticodons (tRNA-Asp, -Asn, -His and -Tyr). Catalysis occurs through a double-displacement mechanism. The nucleophile active site attacks the C1' of nucleotide 34 to detach the guanine base from the RNA, forming a covalent enzyme-RNA intermediate. The proton acceptor active site deprotonates the incoming PreQ1, allowing a nucleophilic attack on the C1' of the ribose to form the product. After dissociation, two additional enzymatic reactions on the tRNA convert PreQ1 to queuine (Q), resulting in the hypermodified nucleoside queuosine (7-(((4,5-cis-dihydroxy-2-cyclopenten-1-yl)amino)methyl)-7-deazaguanosine). The protein is Queuine tRNA-ribosyltransferase of Geobacillus kaustophilus (strain HTA426).